An 886-amino-acid chain; its full sequence is Alanine--tRNA ligase (886 aa).

Zn(2+)-binding residues include His564, His568, Cys666, and His670.

The protein belongs to the class-II aminoacyl-tRNA synthetase family. Zn(2+) serves as cofactor.

The protein resides in the cytoplasm. It catalyses the reaction tRNA(Ala) + L-alanine + ATP = L-alanyl-tRNA(Ala) + AMP + diphosphate. Functionally, catalyzes the attachment of alanine to tRNA(Ala) in a two-step reaction: alanine is first activated by ATP to form Ala-AMP and then transferred to the acceptor end of tRNA(Ala). Also edits incorrectly charged Ser-tRNA(Ala) and Gly-tRNA(Ala) via its editing domain. The chain is Alanine--tRNA ligase from Prochlorococcus marinus (strain MIT 9515).